The primary structure comprises 435 residues: GTPase Obg (435 aa).

The Obg domain occupies 1–159 (MAFIDKCKIV…IEVVLELKTI (159 aa)). Positions 160 to 329 (ADIGIIGLPN…MLDDVIKIYF (170 aa)) constitute an OBG-type G domain. Residues 166–173 (GLPNAGKS), 191–195 (FTTLN), 212–215 (DIPG), 282–285 (NKID), and 310–312 (SAL) contribute to the GTP site. Mg(2+) contacts are provided by serine 173 and threonine 193. An OCT domain is found at 355–435 (TPKNKELDKT…IYDITLEFEE (81 aa)).

The protein belongs to the TRAFAC class OBG-HflX-like GTPase superfamily. OBG GTPase family. In terms of assembly, monomer. It depends on Mg(2+) as a cofactor.

The protein resides in the cytoplasm. Functionally, an essential GTPase which binds GTP, GDP and possibly (p)ppGpp with moderate affinity, with high nucleotide exchange rates and a fairly low GTP hydrolysis rate. Plays a role in control of the cell cycle, stress response, ribosome biogenesis and in those bacteria that undergo differentiation, in morphogenesis control. The protein is GTPase Obg of Ureaplasma urealyticum serovar 10 (strain ATCC 33699 / Western).